A 339-amino-acid polypeptide reads, in one-letter code: 3-isopropylmalate dehydrogenase (339 aa).

Positions 87, 97, 124, and 214 each coordinate substrate. Residues D214, D238, and D242 each coordinate Mg(2+). Residue 274 to 286 participates in NAD(+) binding; the sequence is GSAPDIAGQGIAD.

This sequence belongs to the isocitrate and isopropylmalate dehydrogenases family. LeuB type 2 subfamily. As to quaternary structure, homodimer. Mg(2+) is required as a cofactor. Requires Mn(2+) as cofactor.

It is found in the cytoplasm. The enzyme catalyses (2R,3S)-3-isopropylmalate + NAD(+) = 4-methyl-2-oxopentanoate + CO2 + NADH. It participates in amino-acid biosynthesis; L-leucine biosynthesis; L-leucine from 3-methyl-2-oxobutanoate: step 3/4. Catalyzes the oxidation of 3-carboxy-2-hydroxy-4-methylpentanoate (3-isopropylmalate) to 3-carboxy-4-methyl-2-oxopentanoate. The product decarboxylates to 4-methyl-2 oxopentanoate. The sequence is that of 3-isopropylmalate dehydrogenase from Mycobacterium ulcerans (strain Agy99).